The primary structure comprises 216 residues: Ribosome maturation factor RimP (216 aa).

This sequence belongs to the RimP family.

It localises to the cytoplasm. Required for maturation of 30S ribosomal subunits. The sequence is that of Ribosome maturation factor RimP from Bartonella quintana (strain Toulouse) (Rochalimaea quintana).